The sequence spans 126 residues: Small ribosomal subunit protein uS12 (126 aa).

Residues 1-16 show a composition bias toward polar residues; the sequence is MPTVNQLVRQGRTMNK. The disordered stretch occupies residues 1–24; it reads MPTVNQLVRQGRTMNKTKTKSPAL. D89 bears the 3-methylthioaspartic acid mark.

The protein belongs to the universal ribosomal protein uS12 family. In terms of assembly, part of the 30S ribosomal subunit. Contacts proteins S8 and S17. May interact with IF1 in the 30S initiation complex.

With S4 and S5 plays an important role in translational accuracy. Its function is as follows. Interacts with and stabilizes bases of the 16S rRNA that are involved in tRNA selection in the A site and with the mRNA backbone. Located at the interface of the 30S and 50S subunits, it traverses the body of the 30S subunit contacting proteins on the other side and probably holding the rRNA structure together. The combined cluster of proteins S8, S12 and S17 appears to hold together the shoulder and platform of the 30S subunit. In Elusimicrobium minutum (strain Pei191), this protein is Small ribosomal subunit protein uS12.